We begin with the raw amino-acid sequence, 347 residues long: S-adenosylmethionine:tRNA ribosyltransferase-isomerase (347 aa).

The protein belongs to the QueA family. In terms of assembly, monomer.

The protein localises to the cytoplasm. It catalyses the reaction 7-aminomethyl-7-carbaguanosine(34) in tRNA + S-adenosyl-L-methionine = epoxyqueuosine(34) in tRNA + adenine + L-methionine + 2 H(+). Its pathway is tRNA modification; tRNA-queuosine biosynthesis. Transfers and isomerizes the ribose moiety from AdoMet to the 7-aminomethyl group of 7-deazaguanine (preQ1-tRNA) to give epoxyqueuosine (oQ-tRNA). The polypeptide is S-adenosylmethionine:tRNA ribosyltransferase-isomerase (Streptococcus thermophilus (strain ATCC BAA-491 / LMD-9)).